The sequence spans 361 residues: Isocitrate dehydrogenase [NAD] subunit 1, mitochondrial (361 aa).

The N-terminal 12 residues, 1-12 (MLRQGIAAQKKS), are a transit peptide targeting the mitochondrion. Positions 110, 141, and 229 each coordinate substrate. Residue Asp-229 coordinates Mg(2+).

Belongs to the isocitrate and isopropylmalate dehydrogenases family. As to quaternary structure, octamer of two non-identical subunits IDH1 and IDH2. Requires Mg(2+) as cofactor. Mn(2+) is required as a cofactor.

The protein resides in the mitochondrion. It catalyses the reaction D-threo-isocitrate + NAD(+) = 2-oxoglutarate + CO2 + NADH. Its function is as follows. Performs an essential role in the oxidative function of the citric acid cycle. This Kluyveromyces lactis (strain ATCC 8585 / CBS 2359 / DSM 70799 / NBRC 1267 / NRRL Y-1140 / WM37) (Yeast) protein is Isocitrate dehydrogenase [NAD] subunit 1, mitochondrial (IDH1).